A 449-amino-acid polypeptide reads, in one-letter code: Amidophosphoribosyltransferase (449 aa).

Residues 1–9 (MRGEIMKEK) constitute a propeptide that is removed on maturation. Catalysis depends on Cys-10, which acts as the Nucleophile. A Glutamine amidotransferase type-2 domain is found at 10–224 (CGIFGAYSQD…PGEVIVVKDG (215 aa)). Cys-239 lines the [4Fe-4S] cluster pocket. Mg(2+) contacts are provided by Ser-286, Asp-346, and Asp-347. Residues Cys-383, Cys-432, and Cys-435 each contribute to the [4Fe-4S] cluster site.

This sequence in the C-terminal section; belongs to the purine/pyrimidine phosphoribosyltransferase family. Mg(2+) serves as cofactor. Requires [4Fe-4S] cluster as cofactor.

The catalysed reaction is 5-phospho-beta-D-ribosylamine + L-glutamate + diphosphate = 5-phospho-alpha-D-ribose 1-diphosphate + L-glutamine + H2O. It participates in purine metabolism; IMP biosynthesis via de novo pathway; N(1)-(5-phospho-D-ribosyl)glycinamide from 5-phospho-alpha-D-ribose 1-diphosphate: step 1/2. Its function is as follows. Catalyzes the formation of phosphoribosylamine from phosphoribosylpyrophosphate (PRPP) and glutamine. The chain is Amidophosphoribosyltransferase from Pyrococcus horikoshii (strain ATCC 700860 / DSM 12428 / JCM 9974 / NBRC 100139 / OT-3).